We begin with the raw amino-acid sequence, 470 residues long: Cell division protein FtsA (470 aa).

The tract at residues 416–470 is disordered; that stretch reads NKKDTHENEVESTDEEIYQSEDNHQEHKQNHEHVQDKDKDKEESKFKKLMKSLFE. Acidic residues predominate over residues 425–434; it reads VESTDEEIYQ. The segment covering 436–461 has biased composition (basic and acidic residues); the sequence is EDNHQEHKQNHEHVQDKDKDKEESKF.

The protein belongs to the FtsA/MreB family. Self-interacts. Interacts with FtsZ.

It is found in the cell membrane. Its function is as follows. Cell division protein that is involved in the assembly of the Z ring. May serve as a membrane anchor for the Z ring. The sequence is that of Cell division protein FtsA from Staphylococcus aureus (strain MSSA476).